We begin with the raw amino-acid sequence, 276 residues long: Cell division protein FtsQ (276 aa).

At 1-11 (MQYILKLKYYL) the chain is on the cytoplasmic side. The chain crosses the membrane as a helical span at residues 12 to 32 (YNITWKLVFICVMLVLLIVGI). The Periplasmic portion of the chain corresponds to 33-276 (HKNIKWVCDY…NVSKGSHDYD (244 aa)). In terms of domain architecture, POTRA spans 45–115 (GPLSYIIVTG…NTLKINLIEY (71 aa)).

It belongs to the FtsQ/DivIB family. FtsQ subfamily. Part of a complex composed of FtsB, FtsL and FtsQ.

It localises to the cell inner membrane. Functionally, essential cell division protein. May link together the upstream cell division proteins, which are predominantly cytoplasmic, with the downstream cell division proteins, which are predominantly periplasmic. May control correct divisome assembly. This is Cell division protein FtsQ from Blochmanniella floridana.